The chain runs to 247 residues: Probable transcriptional regulatory protein LPC_0711 (247 aa).

The protein belongs to the TACO1 family.

It is found in the cytoplasm. The sequence is that of Probable transcriptional regulatory protein LPC_0711 from Legionella pneumophila (strain Corby).